The primary structure comprises 565 residues: MMKKHYKPILSQLENCRSLVELNQLHGLMIKSSVIRNVIPLSRLIDFCTTCPETMNLSYARSVFESIDCPSVYIWNSMIRGYSNSPNPDKALIFYQEMLRKGYSPDYFTFPYVLKACSGLRDIQFGSCVHGFVVKTGFEVNMYVSTCLLHMYMCCGEVNYGLRVFEDIPQWNVVAWGSLISGFVNNNRFSDAIEAFREMQSNGVKANETIMVDLLVACGRCKDIVTGKWFHGFLQGLGFDPYFQSKVGFNVILATSLIDMYAKCGDLRTARYLFDGMPERTLVSWNSIITGYSQNGDAEEALCMFLDMLDLGIAPDKVTFLSVIRASMIQGCSQLGQSIHAYVSKTGFVKDAAIVCALVNMYAKTGDAESAKKAFEDLEKKDTIAWTVVIIGLASHGHGNEALSIFQRMQEKGNATPDGITYLGVLYACSHIGLVEEGQRYFAEMRDLHGLEPTVEHYGCMVDILSRAGRFEEAERLVKTMPVKPNVNIWGALLNGCDIHENLELTDRIRSMVAEPEELGSGIYVLLSNIYAKAGRWADVKLIRESMKSKRVDKVLGHSSVETMF.

13 PPR repeats span residues 37–70 (NVIP…IDCP), 71–105 (SVYI…GYSP), 106–140 (DYFT…GFEV), 141–171 (NMYV…IPQW), 172–206 (NVVA…GVKA), 207–241 (NETI…GFDP), 250–280 (NVIL…MPER), 281–315 (TLVS…GIAP), 316–350 (DKVT…GFVK), 351–381 (DAAI…LEKK), 382–416 (DTIA…GNAT), 418–448 (DGIT…MRDL), and 454–484 (TVEH…MPVK). A type E motif region spans residues 489-564 (IWGALLNGCD…VLGHSSVETM (76 aa)).

The protein belongs to the PPR family. PCMP-E subfamily.

The polypeptide is Putative pentatricopeptide repeat-containing protein At3g05240 (PCMP-E82) (Arabidopsis thaliana (Mouse-ear cress)).